A 60-amino-acid chain; its full sequence is Large ribosomal subunit protein bL32 (60 aa).

A disordered region spans residues 1–60; sequence MAVQQNKKSPSKRGMHRSHNALTVPGIAVEPTTGETHLRHHISPNGFYRGRQVLKNKSEA. Residues 9-19 are compositionally biased toward basic residues; the sequence is SPSKRGMHRSH.

The protein belongs to the bacterial ribosomal protein bL32 family.

This chain is Large ribosomal subunit protein bL32, found in Paracidovorax citrulli (strain AAC00-1) (Acidovorax citrulli).